The following is a 433-amino-acid chain: Trigger factor (433 aa).

The PPIase FKBP-type domain maps to 161–246; the sequence is EDRVVIDFVG…LKKVENIVLP (86 aa).

Belongs to the FKBP-type PPIase family. Tig subfamily.

Its subcellular location is the cytoplasm. The enzyme catalyses [protein]-peptidylproline (omega=180) = [protein]-peptidylproline (omega=0). Involved in protein export. Acts as a chaperone by maintaining the newly synthesized protein in an open conformation. Functions as a peptidyl-prolyl cis-trans isomerase. The sequence is that of Trigger factor from Actinobacillus pleuropneumoniae serotype 5b (strain L20).